A 271-amino-acid chain; its full sequence is Tryptophan synthase alpha chain (271 aa).

Residues E49 and D60 each act as proton acceptor in the active site.

The protein belongs to the TrpA family. Tetramer of two alpha and two beta chains.

The enzyme catalyses (1S,2R)-1-C-(indol-3-yl)glycerol 3-phosphate + L-serine = D-glyceraldehyde 3-phosphate + L-tryptophan + H2O. It participates in amino-acid biosynthesis; L-tryptophan biosynthesis; L-tryptophan from chorismate: step 5/5. In terms of biological role, the alpha subunit is responsible for the aldol cleavage of indoleglycerol phosphate to indole and glyceraldehyde 3-phosphate. The sequence is that of Tryptophan synthase alpha chain from Blochmanniella floridana.